Reading from the N-terminus, the 401-residue chain is Argininosuccinate synthase (401 aa).

10 to 18 (AYSGGVDTS) serves as a coordination point for ATP. Y89 contacts L-citrulline. ATP is bound at residue G119. 3 residues coordinate L-aspartate: T121, N125, and D126. Residue N125 participates in L-citrulline binding. L-citrulline is bound by residues R129, S177, S186, E262, and Y274.

Belongs to the argininosuccinate synthase family. Type 1 subfamily. As to quaternary structure, homotetramer.

It localises to the cytoplasm. The catalysed reaction is L-citrulline + L-aspartate + ATP = 2-(N(omega)-L-arginino)succinate + AMP + diphosphate + H(+). It participates in amino-acid biosynthesis; L-arginine biosynthesis; L-arginine from L-ornithine and carbamoyl phosphate: step 2/3. This Thermosynechococcus vestitus (strain NIES-2133 / IAM M-273 / BP-1) protein is Argininosuccinate synthase.